Reading from the N-terminus, the 199-residue chain is Inosine triphosphate pyrophosphatase (199 aa).

ITP is bound at residue 12-17 (TGNAKK). Glutamate 42 is a binding site for Mg(2+). ITP contacts are provided by residues lysine 54, 70-71 (DT), lysine 87, 146-149 (FGWD), lysine 169, and 174-175 (HR).

The protein belongs to the HAM1 NTPase family. In terms of assembly, homodimer. Mg(2+) is required as a cofactor. Requires Mn(2+) as cofactor.

It is found in the cytoplasm. It carries out the reaction ITP + H2O = IMP + diphosphate + H(+). The catalysed reaction is dITP + H2O = dIMP + diphosphate + H(+). It catalyses the reaction XTP + H2O = XMP + diphosphate + H(+). Pyrophosphatase that hydrolyzes non-canonical purine nucleotides such as inosine triphosphate (ITP), deoxyinosine triphosphate (dITP) or xanthosine 5'-triphosphate (XTP) to their respective monophosphate derivatives. The enzyme does not distinguish between the deoxy- and ribose forms. Probably excludes non-canonical purines from RNA and DNA precursor pools, thus preventing their incorporation into RNA and DNA and avoiding chromosomal lesions. The chain is Inosine triphosphate pyrophosphatase from Monosiga brevicollis (Choanoflagellate).